Consider the following 1715-residue polypeptide: Pentafunctional AROM polypeptide (1715 aa).

Residues 1–17 (MTSTASAQQPVLRTKTP) show a composition bias toward polar residues. The segment at 1-26 (MTSTASAQQPVLRTKTPSYHAPPSTD) is disordered. The 3-dehydroquinate synthase stretch occupies residues 1–421 (MTSTASAQQP…VQNMASTVSD (421 aa)). NAD(+)-binding positions include 71 to 73 (DQN), 112 to 115 (EASK), 143 to 145 (GGV), and Asp148. A 7-phospho-2-dehydro-3-deoxy-D-arabino-heptonate-binding site is contributed by Arg159. NAD(+) is bound at residue 168–169 (TT). Asp175 and Lys181 together coordinate 7-phospho-2-dehydro-3-deoxy-D-arabino-heptonate. Lys190 provides a ligand contact to NAD(+). Asn191 contacts 7-phospho-2-dehydro-3-deoxy-D-arabino-heptonate. NAD(+) contacts are provided by residues 208 to 211 (WLKT) and Asn219. Glu223 contacts Zn(2+). Residues 223-226 (EVVK) and Lys287 contribute to the 7-phospho-2-dehydro-3-deoxy-D-arabino-heptonate site. Glu297 serves as the catalytic Proton acceptor; for 3-dehydroquinate synthase activity. 7-phospho-2-dehydro-3-deoxy-D-arabino-heptonate-binding positions include 301–305 (RNLVN) and His308. His308 is a Zn(2+) binding site. The active-site Proton acceptor; for 3-dehydroquinate synthase activity is the His312. His324 and Lys393 together coordinate 7-phospho-2-dehydro-3-deoxy-D-arabino-heptonate. Position 324 (His324) interacts with Zn(2+). Residues 434–895 (VTPIHEQPNK…WDDLERKLGI (462 aa)) form an EPSP synthase region. Cys877 (for EPSP synthase activity) is an active-site residue. The interval 948-1165 (HATIICIGMR…KGGRRTYFLS (218 aa)) is shikimate kinase. 955–962 (GMRASGKT) contributes to the ATP binding site. Residues 1166–1389 (LTFPDVVPKL…AAPGQLSFRQ (224 aa)) form a 3-dehydroquinase region. His1292 (proton acceptor; for 3-dehydroquinate dehydratase activity) is an active-site residue. The Schiff-base intermediate with substrate; for 3-dehydroquinate dehydratase activity role is filled by Lys1320. The tract at residues 1402-1715 (ARRFALFGSP…AAWDVYLQRC (314 aa)) is shikimate dehydrogenase.

The protein in the N-terminal section; belongs to the sugar phosphate cyclases superfamily. Dehydroquinate synthase family. In the 2nd section; belongs to the EPSP synthase family. This sequence in the 3rd section; belongs to the shikimate kinase family. It in the 4th section; belongs to the type-I 3-dehydroquinase family. The protein in the C-terminal section; belongs to the shikimate dehydrogenase family. Homodimer. Zn(2+) serves as cofactor.

The protein localises to the cytoplasm. The catalysed reaction is 7-phospho-2-dehydro-3-deoxy-D-arabino-heptonate = 3-dehydroquinate + phosphate. It carries out the reaction 3-dehydroquinate = 3-dehydroshikimate + H2O. It catalyses the reaction shikimate + NADP(+) = 3-dehydroshikimate + NADPH + H(+). The enzyme catalyses shikimate + ATP = 3-phosphoshikimate + ADP + H(+). The catalysed reaction is 3-phosphoshikimate + phosphoenolpyruvate = 5-O-(1-carboxyvinyl)-3-phosphoshikimate + phosphate. The protein operates within metabolic intermediate biosynthesis; chorismate biosynthesis; chorismate from D-erythrose 4-phosphate and phosphoenolpyruvate: step 2/7. Its pathway is metabolic intermediate biosynthesis; chorismate biosynthesis; chorismate from D-erythrose 4-phosphate and phosphoenolpyruvate: step 3/7. It functions in the pathway metabolic intermediate biosynthesis; chorismate biosynthesis; chorismate from D-erythrose 4-phosphate and phosphoenolpyruvate: step 4/7. It participates in metabolic intermediate biosynthesis; chorismate biosynthesis; chorismate from D-erythrose 4-phosphate and phosphoenolpyruvate: step 5/7. The protein operates within metabolic intermediate biosynthesis; chorismate biosynthesis; chorismate from D-erythrose 4-phosphate and phosphoenolpyruvate: step 6/7. Its function is as follows. The AROM polypeptide catalyzes 5 consecutive enzymatic reactions in prechorismate polyaromatic amino acid biosynthesis. The polypeptide is Pentafunctional AROM polypeptide (Mycosarcoma maydis (Corn smut fungus)).